A 609-amino-acid chain; its full sequence is Dihydroxy-acid dehydratase (609 aa).

D82 contacts Mg(2+). C123 lines the [2Fe-2S] cluster pocket. Positions 124 and 125 each coordinate Mg(2+). At K125 the chain carries N6-carboxylysine. [2Fe-2S] cluster is bound at residue C192. Position 489 (E489) interacts with Mg(2+). The active-site Proton acceptor is S515.

Belongs to the IlvD/Edd family. As to quaternary structure, homodimer. It depends on [2Fe-2S] cluster as a cofactor. The cofactor is Mg(2+).

It carries out the reaction (2R)-2,3-dihydroxy-3-methylbutanoate = 3-methyl-2-oxobutanoate + H2O. The enzyme catalyses (2R,3R)-2,3-dihydroxy-3-methylpentanoate = (S)-3-methyl-2-oxopentanoate + H2O. The protein operates within amino-acid biosynthesis; L-isoleucine biosynthesis; L-isoleucine from 2-oxobutanoate: step 3/4. It functions in the pathway amino-acid biosynthesis; L-valine biosynthesis; L-valine from pyruvate: step 3/4. Functions in the biosynthesis of branched-chain amino acids. Catalyzes the dehydration of (2R,3R)-2,3-dihydroxy-3-methylpentanoate (2,3-dihydroxy-3-methylvalerate) into 2-oxo-3-methylpentanoate (2-oxo-3-methylvalerate) and of (2R)-2,3-dihydroxy-3-methylbutanoate (2,3-dihydroxyisovalerate) into 2-oxo-3-methylbutanoate (2-oxoisovalerate), the penultimate precursor to L-isoleucine and L-valine, respectively. The polypeptide is Dihydroxy-acid dehydratase (Azobacteroides pseudotrichonymphae genomovar. CFP2).